A 228-amino-acid polypeptide reads, in one-letter code: Superoxide dismutase [Mn], mitochondrial (228 aa).

The N-terminal 24 residues, 1–24 (MALRTLVSRRTLATGLGFRQQLRG), are a transit peptide targeting the mitochondrion. Residues His52, His100, Asp189, and His193 each coordinate Mn(2+).

It belongs to the iron/manganese superoxide dismutase family. Homotetramer. Mn(2+) is required as a cofactor.

The protein localises to the mitochondrion matrix. It catalyses the reaction 2 superoxide + 2 H(+) = H2O2 + O2. Functionally, destroys superoxide anion radicals which are normally produced within the cells and which are toxic to biological systems. In Nicotiana plumbaginifolia (Leadwort-leaved tobacco), this protein is Superoxide dismutase [Mn], mitochondrial (SODA).